The primary structure comprises 776 residues: Chitin synthase 1 (776 aa).

6 helical membrane passes run 451-471 (LVSL…FYFL), 487-507 (FWIF…LFIV), 523-543 (LIIL…VFVI), 558-578 (VLVS…LMSI), 695-714 (VVLF…VQVY), and 723-743 (IYLA…AIGS).

It belongs to the chitin synthase family.

Its subcellular location is the cell membrane. It carries out the reaction [(1-&gt;4)-N-acetyl-beta-D-glucosaminyl](n) + UDP-N-acetyl-alpha-D-glucosamine = [(1-&gt;4)-N-acetyl-beta-D-glucosaminyl](n+1) + UDP + H(+). Requires proteolytic activation. Polymerizes chitin, a structural polymer of the cell wall and septum, by transferring the sugar moiety of UDP-GlcNAc to the non-reducing end of the growing chitin polymer. Also involved in forming cross walls in the hyphal phase. The protein is Chitin synthase 1 (CHS1) of Candida albicans (Yeast).